Here is a 155-residue protein sequence, read N- to C-terminus: Small ribosomal subunit protein uS7 (155 aa).

The protein belongs to the universal ribosomal protein uS7 family. As to quaternary structure, part of the 30S ribosomal subunit. Contacts proteins S9 and S11.

Its function is as follows. One of the primary rRNA binding proteins, it binds directly to 16S rRNA where it nucleates assembly of the head domain of the 30S subunit. Is located at the subunit interface close to the decoding center, probably blocks exit of the E-site tRNA. This is Small ribosomal subunit protein uS7 from Mesoplasma florum (strain ATCC 33453 / NBRC 100688 / NCTC 11704 / L1) (Acholeplasma florum).